A 214-amino-acid polypeptide reads, in one-letter code: Outer-membrane lipoprotein LolB (214 aa).

The first 25 residues, 1 to 25, serve as a signal peptide directing secretion; sequence MNNLKRFTESIFSCIALSTLLFLGG. The N-palmitoyl cysteine moiety is linked to residue cysteine 26. Cysteine 26 carries S-diacylglycerol cysteine lipidation.

It belongs to the LolB family. Monomer.

It localises to the cell outer membrane. Its function is as follows. Plays a critical role in the incorporation of lipoproteins in the outer membrane after they are released by the LolA protein. The chain is Outer-membrane lipoprotein LolB from Shewanella putrefaciens (strain CN-32 / ATCC BAA-453).